Reading from the N-terminus, the 67-residue chain is Probable Sec-independent protein translocase protein TatE (67 aa).

A helical membrane pass occupies residues 4–21 (ISITKLLVVAALIVLVFG). The interval 43–67 (MNDDDTSVKKSAEEDVPADKISHKE) is disordered.

This sequence belongs to the TatA/E family. TatE subfamily.

It is found in the cell inner membrane. Functionally, part of the twin-arginine translocation (Tat) system that transports large folded proteins containing a characteristic twin-arginine motif in their signal peptide across membranes. TatE shares overlapping functions with TatA. This is Probable Sec-independent protein translocase protein TatE from Enterobacter lignolyticus (strain SCF1).